The sequence spans 126 residues: Gene 82 protein (126 aa).

The chain is Gene 82 protein (82) from Mycobacterium phage L5 (Mycobacteriophage L5).